Here is a 529-residue protein sequence, read N- to C-terminus: Glucose-6-phosphate isomerase (529 aa).

Residue Glu-322 is the Proton donor of the active site. Residues His-351 and Lys-455 contribute to the active site.

Belongs to the GPI family.

Its subcellular location is the cytoplasm. The enzyme catalyses alpha-D-glucose 6-phosphate = beta-D-fructose 6-phosphate. It functions in the pathway carbohydrate biosynthesis; gluconeogenesis. It participates in carbohydrate degradation; glycolysis; D-glyceraldehyde 3-phosphate and glycerone phosphate from D-glucose: step 2/4. Its function is as follows. Catalyzes the reversible isomerization of glucose-6-phosphate to fructose-6-phosphate. In Thermosynechococcus vestitus (strain NIES-2133 / IAM M-273 / BP-1), this protein is Glucose-6-phosphate isomerase.